A 231-amino-acid polypeptide reads, in one-letter code: Large ribosomal subunit protein uL1 (231 aa).

This sequence belongs to the universal ribosomal protein uL1 family. As to quaternary structure, part of the 50S ribosomal subunit.

In terms of biological role, binds directly to 23S rRNA. The L1 stalk is quite mobile in the ribosome, and is involved in E site tRNA release. Its function is as follows. Protein L1 is also a translational repressor protein, it controls the translation of the L11 operon by binding to its mRNA. The chain is Large ribosomal subunit protein uL1 from Mycoplasmopsis agalactiae (strain NCTC 10123 / CIP 59.7 / PG2) (Mycoplasma agalactiae).